The chain runs to 489 residues: MSRTKSTKVLIIGAGVSGLKAAETILSKSFLTGDDVLVVEAQNRIGGRLKTTDTSQSKLGINYDLGASWFHDSLNNIVLNHMINDGLLDDEKDVYFDDKDLKTFSSTGEVPIVDKKLNRVLEDIEKYIQLYFNRNLGVPDLSLRDIVAQYFEKYNRLITEEQREYCGRMMRYLEFWFGISWDRISGKYAVTTHQGRNLLNKKGYGYLVESLAKRIPESSLLLEEPVNKIIRNNKDAGKRVLVETINGLQIFCDYLIVTVPQSILSLEESSPYSIKWEPKLPQRLVESINSIHFGALGKVIFEFDRIFWDNSKDRFQIIADHTDGDLSRELTELPKPFTYPLFAVNFGRVHNGKASLVILTQAPLTNYLETHPDQAWQYYQPMLQKLSINDEPIPDPINTIVTDWTTNPYIRGSYSTMYTNDDPSDLIISLSGDFEDLGISEPYIKFAGEHTTSEGTGCVHGAYMSGIYAADCILENIFRNDVTGYTIIG.

This sequence to yeast FMS1.

In terms of biological role, may be a flavoprotein with enzymatic activity. This chain is Corticosteroid-binding protein (CBP1), found in Candida albicans (strain SC5314 / ATCC MYA-2876) (Yeast).